Reading from the N-terminus, the 134-residue chain is Large ribosomal subunit protein uL22 (134 aa).

This sequence belongs to the universal ribosomal protein uL22 family. In terms of assembly, part of the 50S ribosomal subunit.

Functionally, this protein binds specifically to 23S rRNA; its binding is stimulated by other ribosomal proteins, e.g. L4, L17, and L20. It is important during the early stages of 50S assembly. It makes multiple contacts with different domains of the 23S rRNA in the assembled 50S subunit and ribosome. In terms of biological role, the globular domain of the protein is located near the polypeptide exit tunnel on the outside of the subunit, while an extended beta-hairpin is found that lines the wall of the exit tunnel in the center of the 70S ribosome. The sequence is that of Large ribosomal subunit protein uL22 from Rhodococcus jostii (strain RHA1).